A 681-amino-acid polypeptide reads, in one-letter code: DNA-directed RNA polymerase subunit beta' (681 aa).

Residues Cys69, Cys71, Cys87, and Cys90 each coordinate Zn(2+). Mg(2+) contacts are provided by Asp489, Asp491, and Asp493.

This sequence belongs to the RNA polymerase beta' chain family. RpoC1 subfamily. In plastids the minimal PEP RNA polymerase catalytic core is composed of four subunits: alpha, beta, beta', and beta''. When a (nuclear-encoded) sigma factor is associated with the core the holoenzyme is formed, which can initiate transcription. Mg(2+) serves as cofactor. Zn(2+) is required as a cofactor.

The protein localises to the plastid. The protein resides in the chloroplast. The enzyme catalyses RNA(n) + a ribonucleoside 5'-triphosphate = RNA(n+1) + diphosphate. Its function is as follows. DNA-dependent RNA polymerase catalyzes the transcription of DNA into RNA using the four ribonucleoside triphosphates as substrates. This is DNA-directed RNA polymerase subunit beta' from Anthoceros angustus (Hornwort).